The sequence spans 123 residues: Ribosome-binding factor A (123 aa).

It belongs to the RbfA family. In terms of assembly, monomer. Binds 30S ribosomal subunits, but not 50S ribosomal subunits or 70S ribosomes.

It is found in the cytoplasm. In terms of biological role, one of several proteins that assist in the late maturation steps of the functional core of the 30S ribosomal subunit. Associates with free 30S ribosomal subunits (but not with 30S subunits that are part of 70S ribosomes or polysomes). Required for efficient processing of 16S rRNA. May interact with the 5'-terminal helix region of 16S rRNA. In Cupriavidus taiwanensis (strain DSM 17343 / BCRC 17206 / CCUG 44338 / CIP 107171 / LMG 19424 / R1) (Ralstonia taiwanensis (strain LMG 19424)), this protein is Ribosome-binding factor A.